We begin with the raw amino-acid sequence, 375 residues long: Methylthioribose-1-phosphate isomerase (375 aa).

Asp-257 functions as the Proton donor in the catalytic mechanism.

This sequence belongs to the eIF-2B alpha/beta/delta subunits family. MtnA subfamily.

Its subcellular location is the cytoplasm. The protein resides in the nucleus. It carries out the reaction 5-(methylsulfanyl)-alpha-D-ribose 1-phosphate = 5-(methylsulfanyl)-D-ribulose 1-phosphate. The protein operates within amino-acid biosynthesis; L-methionine biosynthesis via salvage pathway; L-methionine from S-methyl-5-thio-alpha-D-ribose 1-phosphate: step 1/6. Catalyzes the interconversion of methylthioribose-1-phosphate (MTR-1-P) into methylthioribulose-1-phosphate (MTRu-1-P). The sequence is that of Methylthioribose-1-phosphate isomerase from Leishmania infantum.